A 350-amino-acid chain; its full sequence is Phenylalanine--tRNA ligase alpha subunit (350 aa).

Glutamate 257 lines the Mg(2+) pocket.

This sequence belongs to the class-II aminoacyl-tRNA synthetase family. Phe-tRNA synthetase alpha subunit type 1 subfamily. As to quaternary structure, tetramer of two alpha and two beta subunits. Requires Mg(2+) as cofactor.

Its subcellular location is the cytoplasm. It catalyses the reaction tRNA(Phe) + L-phenylalanine + ATP = L-phenylalanyl-tRNA(Phe) + AMP + diphosphate + H(+). The sequence is that of Phenylalanine--tRNA ligase alpha subunit from Listeria welshimeri serovar 6b (strain ATCC 35897 / DSM 20650 / CCUG 15529 / CIP 8149 / NCTC 11857 / SLCC 5334 / V8).